The following is a 95-amino-acid chain: DNA-directed RNA polymerase subunit Rpo11 (95 aa).

It belongs to the archaeal Rpo11/eukaryotic RPB11/RPC19 RNA polymerase subunit family. As to quaternary structure, part of the RNA polymerase complex.

The protein localises to the cytoplasm. The enzyme catalyses RNA(n) + a ribonucleoside 5'-triphosphate = RNA(n+1) + diphosphate. DNA-dependent RNA polymerase (RNAP) catalyzes the transcription of DNA into RNA using the four ribonucleoside triphosphates as substrates. This Thermococcus sibiricus (strain DSM 12597 / MM 739) protein is DNA-directed RNA polymerase subunit Rpo11.